A 376-amino-acid polypeptide reads, in one-letter code: Chaperone protein DnaJ (376 aa).

The J domain occupies 4–69 (DFYETLGVQK…QKRAAYDRFG (66 aa)). Residues 133-211 (GKTAQIRVPA…CAGQGRVTEE (79 aa)) form a CR-type zinc finger. 8 residues coordinate Zn(2+): C146, C149, C163, C166, C185, C188, C199, and C202. CXXCXGXG motif repeat units follow at residues 146–153 (CTECSGSG), 163–170 (CSMCHGHG), 185–192 (CPQCQGRG), and 199–206 (CPKCAGQG).

This sequence belongs to the DnaJ family. In terms of assembly, homodimer. It depends on Zn(2+) as a cofactor.

The protein localises to the cytoplasm. Participates actively in the response to hyperosmotic and heat shock by preventing the aggregation of stress-denatured proteins and by disaggregating proteins, also in an autonomous, DnaK-independent fashion. Unfolded proteins bind initially to DnaJ; upon interaction with the DnaJ-bound protein, DnaK hydrolyzes its bound ATP, resulting in the formation of a stable complex. GrpE releases ADP from DnaK; ATP binding to DnaK triggers the release of the substrate protein, thus completing the reaction cycle. Several rounds of ATP-dependent interactions between DnaJ, DnaK and GrpE are required for fully efficient folding. Also involved, together with DnaK and GrpE, in the DNA replication of plasmids through activation of initiation proteins. This chain is Chaperone protein DnaJ, found in Mesorhizobium japonicum (strain LMG 29417 / CECT 9101 / MAFF 303099) (Mesorhizobium loti (strain MAFF 303099)).